The sequence spans 352 residues: Holliday junction branch migration complex subunit RuvB (352 aa).

The tract at residues 4–185 (ADRLIAATGP…FGIVQRLEFY (182 aa)) is large ATPase domain (RuvB-L). ATP is bound by residues Ile24, Arg25, Gly66, Lys69, Thr70, Thr71, 132 to 134 (EDF), Arg175, Tyr185, and Arg222. Thr70 provides a ligand contact to Mg(2+). A small ATPAse domain (RuvB-S) region spans residues 186 to 256 (STADLATIVS…VADLALNLLD (71 aa)). A head domain (RuvB-H) region spans residues 259–352 (EHGFDHQDRR…VDEFLDAVDD (94 aa)). DNA-binding residues include Arg295, Arg314, and Arg319.

Belongs to the RuvB family. Homohexamer. Forms an RuvA(8)-RuvB(12)-Holliday junction (HJ) complex. HJ DNA is sandwiched between 2 RuvA tetramers; dsDNA enters through RuvA and exits via RuvB. An RuvB hexamer assembles on each DNA strand where it exits the tetramer. Each RuvB hexamer is contacted by two RuvA subunits (via domain III) on 2 adjacent RuvB subunits; this complex drives branch migration. In the full resolvosome a probable DNA-RuvA(4)-RuvB(12)-RuvC(2) complex forms which resolves the HJ.

The protein localises to the cytoplasm. The catalysed reaction is ATP + H2O = ADP + phosphate + H(+). Its function is as follows. The RuvA-RuvB-RuvC complex processes Holliday junction (HJ) DNA during genetic recombination and DNA repair, while the RuvA-RuvB complex plays an important role in the rescue of blocked DNA replication forks via replication fork reversal (RFR). RuvA specifically binds to HJ cruciform DNA, conferring on it an open structure. The RuvB hexamer acts as an ATP-dependent pump, pulling dsDNA into and through the RuvAB complex. RuvB forms 2 homohexamers on either side of HJ DNA bound by 1 or 2 RuvA tetramers; 4 subunits per hexamer contact DNA at a time. Coordinated motions by a converter formed by DNA-disengaged RuvB subunits stimulates ATP hydrolysis and nucleotide exchange. Immobilization of the converter enables RuvB to convert the ATP-contained energy into a lever motion, pulling 2 nucleotides of DNA out of the RuvA tetramer per ATP hydrolyzed, thus driving DNA branch migration. The RuvB motors rotate together with the DNA substrate, which together with the progressing nucleotide cycle form the mechanistic basis for DNA recombination by continuous HJ branch migration. Branch migration allows RuvC to scan DNA until it finds its consensus sequence, where it cleaves and resolves cruciform DNA. The chain is Holliday junction branch migration complex subunit RuvB from Pseudomonas fluorescens (strain SBW25).